Consider the following 306-residue polypeptide: Fe-S cluster assembly protein dre2 (306 aa).

The tract at residues 21–150 (NVTQKRSLLL…EKPQYQEAAV (130 aa)) is N-terminal SAM-like domain. Residues 151 to 196 (PLRFGANKRKNKISPEPVKIESVGFVDNYDDDELINEDDLLDEEDL) form a linker region. 4 residues coordinate [2Fe-2S] cluster: cysteine 206, cysteine 218, cysteine 221, and cysteine 223. Residues 206–223 (CQPETAKKRRRACKDCTC) form a fe-S binding site A region. The [4Fe-4S] cluster site is built by cysteine 269, cysteine 272, cysteine 280, and cysteine 283. 2 short sequence motifs (cx2C motif) span residues 269–272 (CNSC) and 280–283 (CASC). Residues 269–283 (CNSCSLGDAFRCASC) form a fe-S binding site B region.

Belongs to the anamorsin family. As to quaternary structure, monomer. Interacts with tah18. Interacts with mia40. [2Fe-2S] cluster is required as a cofactor. The cofactor is [4Fe-4S] cluster.

The protein localises to the cytoplasm. The protein resides in the mitochondrion intermembrane space. Its function is as follows. Component of the cytosolic iron-sulfur (Fe-S) protein assembly (CIA) machinery required for the maturation of extramitochondrial Fe-S proteins. Part of an electron transfer chain functioning in an early step of cytosolic Fe-S biogenesis, facilitating the de novo assembly of a [4Fe-4S] cluster on the scaffold complex cfd1-nbp35. Electrons are transferred to dre2 from NADPH via the FAD- and FMN-containing protein tah18. Tah18-dre2 are also required for the assembly of the diferric tyrosyl radical cofactor of ribonucleotide reductase (RNR), probably by providing electrons for reduction during radical cofactor maturation in the catalytic small subunit rnr2. This chain is Fe-S cluster assembly protein dre2, found in Talaromyces stipitatus (strain ATCC 10500 / CBS 375.48 / QM 6759 / NRRL 1006) (Penicillium stipitatum).